Consider the following 341-residue polypeptide: Mitochondrial protein C2orf69 homolog (341 aa).

The transit peptide at 1–35 directs the protein to the mitochondrion; it reads MLQVVQSPHNLVFMGSIRSVVACLSLAAVARKMTA.

Belongs to the C2orf69 family.

It localises to the mitochondrion matrix. In terms of biological role, may play a role in the respiratory chain. The chain is Mitochondrial protein C2orf69 homolog from Danio rerio (Zebrafish).